Reading from the N-terminus, the 131-residue chain is Ribosome-binding factor A (131 aa).

The protein belongs to the RbfA family. In terms of assembly, monomer. Binds 30S ribosomal subunits, but not 50S ribosomal subunits or 70S ribosomes.

The protein localises to the cytoplasm. Functionally, one of several proteins that assist in the late maturation steps of the functional core of the 30S ribosomal subunit. Associates with free 30S ribosomal subunits (but not with 30S subunits that are part of 70S ribosomes or polysomes). Required for efficient processing of 16S rRNA. May interact with the 5'-terminal helix region of 16S rRNA. This Thermotoga sp. (strain RQ2) protein is Ribosome-binding factor A.